The following is a 72-amino-acid chain: Translation initiation factor IF-1 (72 aa).

One can recognise an S1-like domain in the interval 1 to 72; that stretch reads MSKEEAIEVE…TRGRITYRAK (72 aa).

It belongs to the IF-1 family. As to quaternary structure, component of the 30S ribosomal translation pre-initiation complex which assembles on the 30S ribosome in the order IF-2 and IF-3, IF-1 and N-formylmethionyl-tRNA(fMet); mRNA recruitment can occur at any time during PIC assembly.

It is found in the cytoplasm. In terms of biological role, one of the essential components for the initiation of protein synthesis. Stabilizes the binding of IF-2 and IF-3 on the 30S subunit to which N-formylmethionyl-tRNA(fMet) subsequently binds. Helps modulate mRNA selection, yielding the 30S pre-initiation complex (PIC). Upon addition of the 50S ribosomal subunit IF-1, IF-2 and IF-3 are released leaving the mature 70S translation initiation complex. This Geobacter sulfurreducens (strain ATCC 51573 / DSM 12127 / PCA) protein is Translation initiation factor IF-1.